The chain runs to 241 residues: Small ribosomal subunit protein uS2 (241 aa).

Belongs to the universal ribosomal protein uS2 family.

This is Small ribosomal subunit protein uS2 from Salmonella choleraesuis (strain SC-B67).